Here is a 184-residue protein sequence, read N- to C-terminus: Peptide deformylase (184 aa).

2 residues coordinate Fe cation: Cys96 and His138. Glu139 is an active-site residue. Residue His142 participates in Fe cation binding.

The protein belongs to the polypeptide deformylase family. The cofactor is Fe(2+).

The catalysed reaction is N-terminal N-formyl-L-methionyl-[peptide] + H2O = N-terminal L-methionyl-[peptide] + formate. Its function is as follows. Removes the formyl group from the N-terminal Met of newly synthesized proteins. Requires at least a dipeptide for an efficient rate of reaction. N-terminal L-methionine is a prerequisite for activity but the enzyme has broad specificity at other positions. This Cytophaga hutchinsonii (strain ATCC 33406 / DSM 1761 / CIP 103989 / NBRC 15051 / NCIMB 9469 / D465) protein is Peptide deformylase.